Consider the following 404-residue polypeptide: NADH-quinone oxidoreductase subunit D (404 aa).

This sequence belongs to the complex I 49 kDa subunit family. As to quaternary structure, NDH-1 is composed of 14 different subunits. Subunits NuoB, C, D, E, F, and G constitute the peripheral sector of the complex.

The protein localises to the cell inner membrane. It carries out the reaction a quinone + NADH + 5 H(+)(in) = a quinol + NAD(+) + 4 H(+)(out). Functionally, NDH-1 shuttles electrons from NADH, via FMN and iron-sulfur (Fe-S) centers, to quinones in the respiratory chain. The immediate electron acceptor for the enzyme in this species is believed to be ubiquinone. Couples the redox reaction to proton translocation (for every two electrons transferred, four hydrogen ions are translocated across the cytoplasmic membrane), and thus conserves the redox energy in a proton gradient. In Dinoroseobacter shibae (strain DSM 16493 / NCIMB 14021 / DFL 12), this protein is NADH-quinone oxidoreductase subunit D.